A 272-amino-acid polypeptide reads, in one-letter code: S-adenosylmethionine decarboxylase proenzyme (272 aa).

S122 functions as the Schiff-base intermediate with substrate; via pyruvic acid in the catalytic mechanism. S122 is modified (pyruvic acid (Ser); by autocatalysis). The active-site Proton acceptor; for processing activity is H127. Residue C150 is the Proton donor; for catalytic activity of the active site.

Belongs to the prokaryotic AdoMetDC family. Type 2 subfamily. As to quaternary structure, heterooctamer of four alpha and four beta chains arranged as a tetramer of alpha/beta heterodimers. The cofactor is pyruvate. Is synthesized initially as an inactive proenzyme. Formation of the active enzyme involves a self-maturation process in which the active site pyruvoyl group is generated from an internal serine residue via an autocatalytic post-translational modification. Two non-identical subunits are generated from the proenzyme in this reaction, and the pyruvate is formed at the N-terminus of the alpha chain, which is derived from the carboxyl end of the proenzyme. The post-translation cleavage follows an unusual pathway, termed non-hydrolytic serinolysis, in which the side chain hydroxyl group of the serine supplies its oxygen atom to form the C-terminus of the beta chain, while the remainder of the serine residue undergoes an oxidative deamination to produce ammonia and the pyruvoyl group blocking the N-terminus of the alpha chain.

It catalyses the reaction S-adenosyl-L-methionine + H(+) = S-adenosyl 3-(methylsulfanyl)propylamine + CO2. The protein operates within amine and polyamine biosynthesis; S-adenosylmethioninamine biosynthesis; S-adenosylmethioninamine from S-adenosyl-L-methionine: step 1/1. In terms of biological role, catalyzes the decarboxylation of S-adenosylmethionine to S-adenosylmethioninamine (dcAdoMet), the propylamine donor required for the synthesis of the polyamines spermine and spermidine from the diamine putrescine. This chain is S-adenosylmethionine decarboxylase proenzyme, found in Clostridium botulinum (strain Eklund 17B / Type B).